The primary structure comprises 555 residues: 4-coumarate--CoA ligase-like 9 (555 aa).

Residues Ser-200, Ser-201, Gly-202, Thr-203, Thr-204, and Lys-208 each coordinate ATP. Tyr-248 contributes to the (E)-4-coumaroyl-AMP binding site. Position 269 (Arg-269) interacts with CoA. An SBD1 region spans residues 271-342 (DLRTFLRALV…RKFPGVQVEE (72 aa)). (E)-4-coumaroyl-AMP is bound at residue Ala-320. 5 residues coordinate ATP: Glu-342, Ala-343, Thr-347, Asp-431, and Arg-446. (E)-4-coumaroyl-AMP-binding residues include Ala-343 and Thr-347. Residues 343 to 410 (AYGLTEHSCI…VRSQSVMQGY (68 aa)) form an SBD2 region. Residues Lys-448 and Lys-452 each contribute to the (E)-4-coumaroyl-AMP site. CoA-binding residues include Lys-454 and Gly-455. Lys-537 is a binding site for ATP.

This sequence belongs to the ATP-dependent AMP-binding enzyme family. In terms of assembly, interacts with STS1. Mg(2+) serves as cofactor.

It catalyses the reaction (E)-4-coumarate + ATP + CoA = (E)-4-coumaroyl-CoA + AMP + diphosphate. It carries out the reaction (E)-4-coumarate + ATP + H(+) = (E)-4-coumaroyl-AMP + diphosphate. The catalysed reaction is (E)-4-coumaroyl-AMP + CoA = (E)-4-coumaroyl-CoA + AMP + H(+). Carboxylate--CoA ligase that may use 4-coumarate as substrate. Follows a two-step reaction mechanism, wherein the carboxylate substrate first undergoes adenylation by ATP, followed by a thioesterification in the presence of CoA to yield the final CoA thioester. The polypeptide is 4-coumarate--CoA ligase-like 9 (4CLL9) (Oryza sativa subsp. japonica (Rice)).